A 280-amino-acid polypeptide reads, in one-letter code: Large ribosomal subunit protein uL2 (280 aa).

Residues 215–280 are disordered; sequence GRRPHVRGSA…IQRANDKKEK (66 aa).

Belongs to the universal ribosomal protein uL2 family. Part of the 50S ribosomal subunit. Forms a bridge to the 30S subunit in the 70S ribosome.

Its function is as follows. One of the primary rRNA binding proteins. Required for association of the 30S and 50S subunits to form the 70S ribosome, for tRNA binding and peptide bond formation. It has been suggested to have peptidyltransferase activity; this is somewhat controversial. Makes several contacts with the 16S rRNA in the 70S ribosome. The sequence is that of Large ribosomal subunit protein uL2 from Dictyoglomus thermophilum (strain ATCC 35947 / DSM 3960 / H-6-12).